A 514-amino-acid chain; its full sequence is FAD-dependent monooxygenase AacuC (514 aa).

The tract at residues 1-29 (MVSNEYLTHGDKDEFDPAKWSSTPGELPP) is disordered. Residues 8 to 17 (THGDKDEFDP) are compositionally biased toward basic and acidic residues. V79 and R146 together coordinate FAD. R227 is an active-site residue. D358 and G371 together coordinate FAD.

Belongs to the paxM FAD-dependent monooxygenase family. FAD is required as a cofactor.

It participates in secondary metabolite biosynthesis. Functionally, FAD-dependent monooxygenase; part of the gene cluster that mediates the biosynthesis of the tetrahydroxanthone dimer secalonic acid D. The pathway begins with the synthesis of atrochrysone thioester by the polyketide synthase AacuL. The atrochrysone carboxyl ACP thioesterase AacuM then breaks the thioester bond and releases the atrochrysone carboxylic acid from AacuL. Atrochrysone carboxylic acid is decarboxylated by the decarboxylase AacuI, and oxidized by the anthrone oxygenase AacuG to yield emodin. Emodin is then reduced to emodin hydroquinone by a yet unidentified oxidoreductase. A-ring reduction by the short chain dehydrogenase AacuN, dehydration by the scytalone dehydratase-like protein AacuK and probable spontaneous re-oxidation, results in overall deoxygenation to chrysophanol. Baeyer-Villiger oxidation by the Baeyer-Villiger monooxygenase (BVMO) AacuH then yields monodictyphenone. Monodictyphenone is transformed into compounds with the tetrahydroxanthone skeleton via methylesterification by the methyltransferase AacuQ, followed by the action of the flavin-dependent monooxygenase AacuC, the isomerase AacuP, and the short chain dehydrogenase/reductase AacuF or AacuD. AacuF and AacuD should accept the same compound as a substrate but perform the ketoreduction with a different stereoselectivity, thus yielding blennolides B and A, respectively. In the final step of the biosynthesis, the cytochrome P450 monooxygenase AacuE accepts blennolide B and/or blennolide A to conduct the dimerization reaction to furnish the tetrahydroxanthone dimers, secalonic acids D, B, and F. The protein is FAD-dependent monooxygenase AacuC of Aspergillus aculeatus (strain ATCC 16872 / CBS 172.66 / WB 5094).